We begin with the raw amino-acid sequence, 331 residues long: Flagellar P-ring protein (331 aa).

The first 25 residues, 1-25 (MKKRLAVLLVIVLTITFSFSVTTRI), serve as a signal peptide directing secretion.

The protein belongs to the FlgI family. The basal body constitutes a major portion of the flagellar organelle and consists of four rings (L,P,S, and M) mounted on a central rod.

It is found in the periplasm. It localises to the bacterial flagellum basal body. Its function is as follows. Assembles around the rod to form the L-ring and probably protects the motor/basal body from shearing forces during rotation. The protein is Flagellar P-ring protein of Thermotoga petrophila (strain ATCC BAA-488 / DSM 13995 / JCM 10881 / RKU-1).